The chain runs to 463 residues: Carnosine N-methyltransferase (463 aa).

Disordered stretches follow at residues 1-64 (MTKN…SQLK) and 79-104 (KHNH…EKEE). Residues 9–58 (KSNNSNISNNNNNNNNNNNNNNNNNNNNNNNNNNNNNNNNNNNNNNNNKN) show a composition bias toward low complexity. A compositionally biased stretch (basic and acidic residues) spans 79-93 (KHNHDHSHDHNHDYD). Residues 94–103 (DNNEDDEEKE) show a composition bias toward acidic residues. S-adenosyl-L-methionine contacts are provided by glutamine 215, arginine 218, glycine 260, glutamate 281, aspartate 351, phenylalanine 352, and cysteine 367. Aspartate 371 is a binding site for carnosine. Residue tyrosine 379 coordinates S-adenosyl-L-methionine. Residues histidine 402 and tyrosine 450 each contribute to the carnosine site.

Belongs to the carnosine N-methyltransferase family.

It catalyses the reaction carnosine + S-adenosyl-L-methionine = anserine + S-adenosyl-L-homocysteine + H(+). Its function is as follows. N-methyltransferase that mediates the formation of anserine (beta-alanyl-N(Pi)-methyl-L-histidine) from carnosine. This is Carnosine N-methyltransferase from Dictyostelium discoideum (Social amoeba).